The primary structure comprises 483 residues: Zinc metalloproteinase/disintegrin (483 aa).

The first 20 residues, Met1–Ser20, serve as a signal peptide directing secretion. A propeptide spanning residues Ile21–Pro190 is cleaved from the precursor. Residues Arg198–Pro394 enclose the Peptidase M12B domain. Ca(2+) is bound by residues Glu201 and Asp285. Disulfide bonds link Cys309-Cys389, Cys349-Cys373, and Cys351-Cys356. His334 is a binding site for Zn(2+). Glu335 is a catalytic residue. Zn(2+) is bound by residues His338 and His344. Ca(2+) is bound by residues Cys389 and Asn392. A propeptide spanning residues Leu395–Phe418 is cleaved from the precursor. A Disintegrin domain is found at Thr402 to Ala483. Disulfide bonds link Cys425–Cys448, Cys439–Cys445, Cys444–Cys469, and Cys457–Cys476. The short motif at Arg461 to Asp463 is the Cell attachment site element.

The protein belongs to the venom metalloproteinase (M12B) family. P-II subfamily. P-IId sub-subfamily. As to quaternary structure, homodimer; disulfide-linked (disintegrin). Zn(2+) serves as cofactor. As to expression, expressed by the venom gland.

It localises to the secreted. In terms of biological role, impairs hemostasis in the envenomed animal. This protein has not been identified in the venom. Its function is as follows. Inhibits ADP-induced platelet aggregation. Binds and inhibits integrins GPIIb/GPIIIa (ITGA2B/ITGB3), alpha-5/beta-1 (ITGA5/ITGB1), alpha-V/beta-3 (ITGAV/ITGB3), and alpha-V/beta-5 (ITGAV/ITGB5). It blocks cancer cell adhesion (tested on human breast cancer cell line MDA-MB-435) to fibronectin and vitronectin and thus prevents invasion of cancer cells. The protein is Zinc metalloproteinase/disintegrin of Agkistrodon contortrix contortrix (Southern copperhead).